The chain runs to 135 residues: Ribonuclease VapC35 (135 aa).

In terms of domain architecture, PINc spans 2-123 (IYLETSALVK…DNRLKEAAEA (122 aa)). 2 residues coordinate Mg(2+): Glu-5 and Asp-91.

Belongs to the PINc/VapC protein family. Mg(2+) serves as cofactor.

Toxic component of a type II toxin-antitoxin (TA) system. An RNase. Its toxic effect is neutralized by coexpression with cognate antitoxin VapB35. The sequence is that of Ribonuclease VapC35 from Mycobacterium tuberculosis (strain CDC 1551 / Oshkosh).